The chain runs to 121 residues: Large ribosomal subunit protein bL12 (121 aa).

This sequence belongs to the bacterial ribosomal protein bL12 family. Homodimer. Part of the ribosomal stalk of the 50S ribosomal subunit. Forms a multimeric L10(L12)X complex, where L10 forms an elongated spine to which 2 to 4 L12 dimers bind in a sequential fashion. Binds GTP-bound translation factors.

Its function is as follows. Forms part of the ribosomal stalk which helps the ribosome interact with GTP-bound translation factors. Is thus essential for accurate translation. This chain is Large ribosomal subunit protein bL12, found in Halalkalibacterium halodurans (strain ATCC BAA-125 / DSM 18197 / FERM 7344 / JCM 9153 / C-125) (Bacillus halodurans).